Consider the following 193-residue polypeptide: MSVIPMVVEQTSRGERSYDIYSRLLKERVIFLSGEVEDRMANLIVAQLLFLESEDPTKDINIYINSPGGSVTAGMAIYDTMQFIKPDIRTLCIGQACSMGAFLLAGGTAGKRAALPNARVMIHQPLGGFRGQASDIQIHAQEILKIKHTLNDRLAFHTGQGIERIEKDTDRDNFMSAEEAQAYGLVDEVLVKR.

Residue S98 is the Nucleophile of the active site. H123 is a catalytic residue.

This sequence belongs to the peptidase S14 family. Fourteen ClpP subunits assemble into 2 heptameric rings which stack back to back to give a disk-like structure with a central cavity, resembling the structure of eukaryotic proteasomes.

It is found in the cytoplasm. The catalysed reaction is Hydrolysis of proteins to small peptides in the presence of ATP and magnesium. alpha-casein is the usual test substrate. In the absence of ATP, only oligopeptides shorter than five residues are hydrolyzed (such as succinyl-Leu-Tyr-|-NHMec, and Leu-Tyr-Leu-|-Tyr-Trp, in which cleavage of the -Tyr-|-Leu- and -Tyr-|-Trp bonds also occurs).. Cleaves peptides in various proteins in a process that requires ATP hydrolysis. Has a chymotrypsin-like activity. Plays a major role in the degradation of misfolded proteins. This Haemophilus influenzae (strain 86-028NP) protein is ATP-dependent Clp protease proteolytic subunit.